A 540-amino-acid chain; its full sequence is 2-succinyl-5-enolpyruvyl-6-hydroxy-3-cyclohexene-1-carboxylate synthase (540 aa).

Belongs to the TPP enzyme family. MenD subfamily. As to quaternary structure, homodimer. Mg(2+) serves as cofactor. The cofactor is Mn(2+). Thiamine diphosphate is required as a cofactor.

It carries out the reaction isochorismate + 2-oxoglutarate + H(+) = 5-enolpyruvoyl-6-hydroxy-2-succinyl-cyclohex-3-ene-1-carboxylate + CO2. The protein operates within quinol/quinone metabolism; 1,4-dihydroxy-2-naphthoate biosynthesis; 1,4-dihydroxy-2-naphthoate from chorismate: step 2/7. It participates in quinol/quinone metabolism; menaquinone biosynthesis. In terms of biological role, catalyzes the thiamine diphosphate-dependent decarboxylation of 2-oxoglutarate and the subsequent addition of the resulting succinic semialdehyde-thiamine pyrophosphate anion to isochorismate to yield 2-succinyl-5-enolpyruvyl-6-hydroxy-3-cyclohexene-1-carboxylate (SEPHCHC). The protein is 2-succinyl-5-enolpyruvyl-6-hydroxy-3-cyclohexene-1-carboxylate synthase of Mycobacteroides abscessus (strain ATCC 19977 / DSM 44196 / CCUG 20993 / CIP 104536 / JCM 13569 / NCTC 13031 / TMC 1543 / L948) (Mycobacterium abscessus).